Here is a 1895-residue protein sequence, read N- to C-terminus: Probable WRKY transcription factor 19 (1895 aa).

Residues 1–85 are disordered; it reads MSEKEELPLT…SGSGLSQQLN (85 aa). Residues 10–22 show a composition bias toward polar residues; the sequence is TLTSIGAATATSD. The span at 28–39 shows a compositional bias: low complexity; the sequence is GSSGEGISSSSS. The segment covering 46–62 has biased composition (polar residues); it reads MQNSPTGLMISQSSSMC. The segment covering 75–85 has biased composition (low complexity); the sequence is SSGSGLSQQLN. The region spanning 291-371 is the PAH domain; the sequence is RPLTIDGGGN…LGFNTYLSKE (81 aa). A compositionally biased stretch (polar residues) spans 408 to 417; it reads ANMQPQTEYP. Disordered stretches follow at residues 408–442, 517–538, and 580–620; these read ANMQ…SSLL, YKDR…TYLS, and EASD…ADAS. Over residues 418–427 the composition is skewed to low complexity; sequence SSSAVQSFSS. The span at 428 to 442 shows a compositional bias: polar residues; sequence GQPQIPTSAPDSSLL. Residues 462–526 constitute a DNA-binding region (WRKY 1); that stretch reads NVDKQVNDGY…YKDRHNHEPP (65 aa). Positions 635-700 form a DNA-binding region, WRKY 2; it reads SEVDNLDDGY…SLCRRGISVY (66 aa). The TIR domain occupies 666–808; it reads KDYDVVIRYG…EIVRDALKVL (143 aa). Positions 800 to 1087 constitute an NB-ARC domain; it reads IVRDALKVLC…LDGCGFSAHV (288 aa). Residue 844-851 participates in ATP binding; sequence GTVGIGKT. 10 LRR repeats span residues 1206–1227, 1228–1249, 1259–1281, 1282–1304, 1306–1328, 1329–1351, 1352–1371, 1373–1395, 1397–1419, and 1421–1442; these read KLRL…FNPE, NLVE…KKAR, KLKK…SSAT, NLEH…ISYL, KLVF…VDLE, SLEV…SPNV, KELY…IKNL, LLEK…IYKL, HLET…SRRM, and CLRF…ISYL. The tract at residues 1562–1583 is disordered; sequence ETVAPPSSSSEAREEEVETEET. The 252-residue stretch at 1626–1877 folds into the Protein kinase domain; sequence WQKGQLLGRG…AAELLNHPFV (252 aa). ATP-binding positions include 1632 to 1640 and K1654; that span reads LGRGSLGSV. Residue D1758 is part of the active site.

This sequence belongs to the disease resistance X-TIR-NB-LRR-X family.

Its subcellular location is the nucleus. Its function is as follows. Transcription factor. Interacts specifically with the W box (5'-(T)TGAC[CT]-3'), a frequently occurring elicitor-responsive cis-acting element. May act also as a disease resistance protein with a serine/threonine-protein kinase activity. The polypeptide is Probable WRKY transcription factor 19 (WRKY19) (Arabidopsis thaliana (Mouse-ear cress)).